A 474-amino-acid chain; its full sequence is tRNA-2-methylthio-N(6)-dimethylallyladenosine synthase (474 aa).

In terms of domain architecture, MTTase N-terminal spans 3–120 (KKLHIKTWGC…LPEMINHVQG (118 aa)). [4Fe-4S] cluster-binding residues include C12, C49, C83, C157, C161, and C164. The region spanning 143-375 (RAEGPTAFVS…QQRISQQAME (233 aa)) is the Radical SAM core domain. One can recognise a TRAM domain in the interval 378–441 (RKMVGTVQRV…ASSLRGILLR (64 aa)).

It belongs to the methylthiotransferase family. MiaB subfamily. As to quaternary structure, monomer. [4Fe-4S] cluster is required as a cofactor.

It localises to the cytoplasm. The enzyme catalyses N(6)-dimethylallyladenosine(37) in tRNA + (sulfur carrier)-SH + AH2 + 2 S-adenosyl-L-methionine = 2-methylsulfanyl-N(6)-dimethylallyladenosine(37) in tRNA + (sulfur carrier)-H + 5'-deoxyadenosine + L-methionine + A + S-adenosyl-L-homocysteine + 2 H(+). Its function is as follows. Catalyzes the methylthiolation of N6-(dimethylallyl)adenosine (i(6)A), leading to the formation of 2-methylthio-N6-(dimethylallyl)adenosine (ms(2)i(6)A) at position 37 in tRNAs that read codons beginning with uridine. The polypeptide is tRNA-2-methylthio-N(6)-dimethylallyladenosine synthase (Yersinia pseudotuberculosis serotype O:1b (strain IP 31758)).